Reading from the N-terminus, the 257-residue chain is Pimeloyl-[acyl-carrier protein] methyl ester esterase (257 aa).

Positions 15-241 (HLVLLHGWGL…KAAHAPFVSH (227 aa)) constitute an AB hydrolase-1 domain. Residues tryptophan 22, 82 to 83 (SL), and 143 to 147 (FLALQ) contribute to the substrate site. The Nucleophile role is filled by serine 82. Active-site residues include aspartate 207 and histidine 235. Histidine 235 serves as a coordination point for substrate.

Belongs to the AB hydrolase superfamily. Carboxylesterase BioH family. Monomer.

The protein localises to the cytoplasm. The catalysed reaction is 6-carboxyhexanoyl-[ACP] methyl ester + H2O = 6-carboxyhexanoyl-[ACP] + methanol + H(+). The protein operates within cofactor biosynthesis; biotin biosynthesis. In terms of biological role, the physiological role of BioH is to remove the methyl group introduced by BioC when the pimeloyl moiety is complete. It allows to synthesize pimeloyl-ACP via the fatty acid synthetic pathway through the hydrolysis of the ester bonds of pimeloyl-ACP esters. This chain is Pimeloyl-[acyl-carrier protein] methyl ester esterase, found in Klebsiella pneumoniae subsp. pneumoniae (strain ATCC 700721 / MGH 78578).